A 173-amino-acid chain; its full sequence is Large ribosomal subunit protein uL5 (173 aa).

Belongs to the universal ribosomal protein uL5 family. Component of the large ribosomal subunit.

Its subcellular location is the nucleus. It localises to the cytoplasm. Its function is as follows. Component of the ribosome, a large ribonucleoprotein complex responsible for the synthesis of proteins in the cell. The small ribosomal subunit (SSU) binds messenger RNAs (mRNAs) and translates the encoded message by selecting cognate aminoacyl-transfer RNA (tRNA) molecules. The large subunit (LSU) contains the ribosomal catalytic site termed the peptidyl transferase center (PTC), which catalyzes the formation of peptide bonds, thereby polymerizing the amino acids delivered by tRNAs into a polypeptide chain. The nascent polypeptides leave the ribosome through a tunnel in the LSU and interact with protein factors that function in enzymatic processing, targeting, and the membrane insertion of nascent chains at the exit of the ribosomal tunnel. This is Large ribosomal subunit protein uL5 (RPL11) from Encephalitozoon cuniculi (strain GB-M1) (Microsporidian parasite).